The sequence spans 595 residues: MSSSMNVATMQALTFSRRLLPSVASRYLSSSSVTVTGYSGRSSAYAPSFRSIKCVSVSPEASIVSDTKKLADASKSTNLIPIYRCIFSDQLTPVLAYRCLVKEDDREAPSFLFESVEPGSQMSSVGRYSVVGAQPAMEIVAKENKVIVMDHNNETMTEEFVEDPMEIPRKISEKWNPDPQLVQDLPDAFCGGWVGFFSYDTVRYVEKRKLPFSKAPEDDRNLPDMHLGLYDDVVVFDHVEKKAYVIHWIRLDGSLPYEKAYSNGMQHLENLVAKLHDIEPPKLAAGNVNLQTRQFGPSLDNSNVTCEEYKEAVVKAKEHILAGDIFQIVLSQRFERRTFADPFEVYRALRVVNPSPYMGYLQARGCILVASSPEILTKVKQNKIVNRPLAGTSKRGKNEVEDKRLEKELLENEKQCAEHIMLVDLGRNDVGKVTKYGSVKVEKLMNIERYSHVMHISSTVTGELQDGLTCWDVLRAALPVGTVSGAPKVKAMELIDELEPTRRGPYSGGFGGVSFTGDMDIALSLRTIVFPTACQYNTMYSYKDANKRREWVAYLQAGAGVVADSDPQDEHCECQNKAAGLARAIDLAESAFVKK.

The N-terminal 54 residues, 1-54, are a transit peptide targeting the chloroplast; sequence MSSSMNVATMQALTFSRRLLPSVASRYLSSSSVTVTGYSGRSSAYAPSFRSIKC. Val55 is modified (N-acetylvaline). L-tryptophan contacts are provided by residues Ser115 and 356 to 358; that span reads PYM. 391 to 392 is a chorismate binding site; that stretch reads GT. Position 418 (Glu418) interacts with Mg(2+). Residues Tyr506, Arg526, 558–560, and Gly560 each bind chorismate; that span reads GAG. Glu573 serves as a coordination point for Mg(2+).

It belongs to the anthranilate synthase component I family. Heterotetramer consisting of two non-identical subunits: a beta subunit and a large alpha subunit. Mg(2+) serves as cofactor. As to expression, expressed in the central cylinder of mature primary root zones, including pericycle and early lateral root primordia, and vasculature of cotyledons.

The protein localises to the plastid. It localises to the chloroplast. The catalysed reaction is chorismate + L-glutamine = anthranilate + pyruvate + L-glutamate + H(+). Its pathway is amino-acid biosynthesis; L-tryptophan biosynthesis; L-tryptophan from chorismate: step 1/5. With respect to regulation, feedback inhibition by tryptophan. In terms of biological role, part of a heterotetrameric complex that catalyzes the two-step biosynthesis of anthranilate, an intermediate in the biosynthesis of L-tryptophan. In the first step, the glutamine-binding beta subunit of anthranilate synthase (AS) provides the glutamine amidotransferase activity which generates ammonia as a substrate that, along with chorismate, is used in the second step, catalyzed by the large alpha subunit of AS to produce anthranilate. Plays an important regulatory role in auxin production via the tryptophan-dependent biosynthetic pathway. This is Anthranilate synthase alpha subunit 1, chloroplastic (ASA1) from Arabidopsis thaliana (Mouse-ear cress).